We begin with the raw amino-acid sequence, 589 residues long: Phosphoenolpyruvate carboxykinase [GTP] (589 aa).

Substrate contacts are provided by residues R75 and 207–209; that span reads YGG. The Mn(2+) site is built by K216 and H236. A substrate-binding site is contributed by S258. 259 to 264 contacts GTP; it reads ASGKTN. The active site involves S260. D287 contributes to the Mn(2+) binding site. Substrate is bound at residue 374–376; it reads NSR. GTP contacts are provided by residues R376, R407, and 500–503; that span reads FAEN.

It belongs to the phosphoenolpyruvate carboxykinase [GTP] family. Requires Mn(2+) as cofactor.

Its subcellular location is the cytoplasm. It carries out the reaction oxaloacetate + GTP = phosphoenolpyruvate + GDP + CO2. It participates in carbohydrate biosynthesis; gluconeogenesis. In terms of biological role, catalyzes the conversion of oxaloacetate (OAA) to phosphoenolpyruvate (PEP), the rate-limiting step in the metabolic pathway that produces glucose from lactate and other precursors derived from the citric acid cycle. The protein is Phosphoenolpyruvate carboxykinase [GTP] of Thermoplasma volcanium (strain ATCC 51530 / DSM 4299 / JCM 9571 / NBRC 15438 / GSS1).